The following is a 448-amino-acid chain: Biotin carboxylase (448 aa).

Residues 1-445 (MLEKVVIANR…NIHYLEKKLG (445 aa)) form the Biotin carboxylation domain. ATP contacts are provided by residues Lys116, Lys159, 165–166 (GG), 201–204 (EKYL), His209, and His236. An ATP-grasp domain is found at 120 to 317 (IKAMKKAGVP…LVKEQLRIAA (198 aa)). A hydrogencarbonate-binding site is contributed by Lys238. Positions 276 and 288 each coordinate ATP. Residues Glu276, Glu288, and Asn290 each coordinate Mg(2+). Residues Glu276, Glu288, and Asn290 each contribute to the Mn(2+) site. 3 residues coordinate hydrogencarbonate: Arg292, Val295, and Arg338. Arg292 is an active-site residue. A biotin-binding site is contributed by Arg338.

In terms of assembly, acetyl-CoA carboxylase is a heterohexamer of biotin carboxyl carrier protein, biotin carboxylase and the two subunits of carboxyl transferase in a 2:2 complex. It depends on Mg(2+) as a cofactor. Mn(2+) serves as cofactor.

It carries out the reaction N(6)-biotinyl-L-lysyl-[protein] + hydrogencarbonate + ATP = N(6)-carboxybiotinyl-L-lysyl-[protein] + ADP + phosphate + H(+). It functions in the pathway lipid metabolism; malonyl-CoA biosynthesis; malonyl-CoA from acetyl-CoA: step 1/1. In terms of biological role, this protein is a component of the acetyl coenzyme A carboxylase complex; first, biotin carboxylase catalyzes the carboxylation of the carrier protein and then the transcarboxylase transfers the carboxyl group to form malonyl-CoA. The sequence is that of Biotin carboxylase (accC) from Haemophilus influenzae (strain ATCC 51907 / DSM 11121 / KW20 / Rd).